The chain runs to 81 residues: Photosystem I iron-sulfur center (81 aa).

4Fe-4S ferredoxin-type domains lie at 2-31 (SHAVKIYDTCIGCTQCVRACPLDVLEMVPW) and 37-68 (GQIASSPRTEDCVGCKRCETACPTDFLSIRVY). [4Fe-4S] cluster-binding residues include Cys-11, Cys-14, Cys-17, Cys-21, Cys-48, Cys-51, Cys-54, and Cys-58.

In terms of assembly, the cyanobacterial PSI reaction center is composed of one copy each of PsaA,B,C,D,E,F,I,J,K,L,M and X, and forms trimeric complexes. The cofactor is [4Fe-4S] cluster.

It localises to the cellular thylakoid membrane. The catalysed reaction is reduced [plastocyanin] + hnu + oxidized [2Fe-2S]-[ferredoxin] = oxidized [plastocyanin] + reduced [2Fe-2S]-[ferredoxin]. In terms of biological role, apoprotein for the two 4Fe-4S centers FA and FB of photosystem I (PSI); essential for photochemical activity. FB is the terminal electron acceptor of PSI, donating electrons to ferredoxin. The C-terminus interacts with PsaA/B/D and helps assemble the protein into the PSI complex. Required for binding of PsaD and PsaE to PSI. PSI is a plastocyanin/cytochrome c6-ferredoxin oxidoreductase, converting photonic excitation into a charge separation, which transfers an electron from the donor P700 chlorophyll pair to the spectroscopically characterized acceptors A0, A1, FX, FA and FB in turn. The chain is Photosystem I iron-sulfur center from Synechococcus sp. (strain WH8103).